The primary structure comprises 311 residues: Insulin-like growth factor-binding protein 2 (311 aa).

Residues 1–36 (MALGGVGRGGAARAAWPRLLLAALAPALALAGPALP) form the signal peptide. One can recognise an IGFBP N-terminal domain in the interval 38–120 (VLFRCPPCTA…VQGQGTCARP (83 aa)). Intrachain disulfides connect Cys-42–Cys-70, Cys-45–Cys-72, Cys-53–Cys-73, Cys-61–Cys-76, Cys-84–Cys-97, and Cys-91–Cys-117. 2 disordered regions span residues 112–168 (QGQG…PLKT) and 188–210 (GKVGKAHHNHEDSKKSRMPTGRT). In terms of domain architecture, Thyroglobulin type-1 spans 209–291 (RTPCQQELDQ…APTIRGDPEC (83 aa)). Disulfide bonds link Cys-212-Cys-246, Cys-257-Cys-268, and Cys-270-Cys-291. The Cell attachment site signature appears at 286-288 (RGD).

Binds IGF2 more than IGF1.

Its subcellular location is the secreted. In terms of biological role, inhibits IGF-mediated growth and developmental rates. IGF-binding proteins prolong the half-life of the IGFs and have been shown to either inhibit or stimulate the growth promoting effects of the IGFs on cell culture. They alter the interaction of IGFs with their cell surface receptors. The sequence is that of Insulin-like growth factor-binding protein 2 (IGFBP2) from Gallus gallus (Chicken).